Consider the following 290-residue polypeptide: 4-diphosphocytidyl-2-C-methyl-D-erythritol kinase (290 aa).

K14 is an active-site residue. 103–113 is a binding site for ATP; sequence PMGGGLGGGSS. Residue D145 is part of the active site.

The protein belongs to the GHMP kinase family. IspE subfamily. In terms of assembly, homodimer.

The catalysed reaction is 4-CDP-2-C-methyl-D-erythritol + ATP = 4-CDP-2-C-methyl-D-erythritol 2-phosphate + ADP + H(+). It functions in the pathway isoprenoid biosynthesis; isopentenyl diphosphate biosynthesis via DXP pathway; isopentenyl diphosphate from 1-deoxy-D-xylulose 5-phosphate: step 3/6. In terms of biological role, catalyzes the phosphorylation of the position 2 hydroxy group of 4-diphosphocytidyl-2C-methyl-D-erythritol. The polypeptide is 4-diphosphocytidyl-2-C-methyl-D-erythritol kinase (Pectobacterium atrosepticum (strain SCRI 1043 / ATCC BAA-672) (Erwinia carotovora subsp. atroseptica)).